Consider the following 408-residue polypeptide: Imidazolonepropionase (408 aa).

The Fe(3+) site is built by histidine 73 and histidine 75. Positions 73 and 75 each coordinate Zn(2+). Arginine 82, tyrosine 145, and histidine 178 together coordinate 4-imidazolone-5-propanoate. Tyrosine 145 contacts N-formimidoyl-L-glutamate. Residue histidine 243 coordinates Fe(3+). Residue histidine 243 coordinates Zn(2+). Residue glutamine 246 participates in 4-imidazolone-5-propanoate binding. Residue aspartate 318 coordinates Fe(3+). Aspartate 318 is a Zn(2+) binding site. N-formimidoyl-L-glutamate-binding residues include asparagine 320 and glycine 322. Residue serine 323 participates in 4-imidazolone-5-propanoate binding.

It belongs to the metallo-dependent hydrolases superfamily. HutI family. It depends on Zn(2+) as a cofactor. Fe(3+) serves as cofactor.

The protein localises to the cytoplasm. The catalysed reaction is 4-imidazolone-5-propanoate + H2O = N-formimidoyl-L-glutamate. The protein operates within amino-acid degradation; L-histidine degradation into L-glutamate; N-formimidoyl-L-glutamate from L-histidine: step 3/3. Functionally, catalyzes the hydrolytic cleavage of the carbon-nitrogen bond in imidazolone-5-propanoate to yield N-formimidoyl-L-glutamate. It is the third step in the universal histidine degradation pathway. This chain is Imidazolonepropionase, found in Shewanella loihica (strain ATCC BAA-1088 / PV-4).